An 870-amino-acid chain; its full sequence is MADHTPMMRQYLEIKSGYPDAVLFFRMGDFYEMFLDDALLASRILDITLTSRNKGSGDEIPFCGVPYHSVTPYITKLIENGHKVAICEQVEDPKQTKGIVRREVVRVITPGLLIETENLSPDDNNYLLALHQGAEEQWGVAWLDLSTGEFRVTELAGPGSALAEAVCINPAEVLLADGVRLEEFPADLKEYLAQKIVSRAPAWVYERDYTSSLICDQFGAASPDVLGLEGLPSGLLAAGAALYYLRENRKSAIPHIRDIRVYQRSEHLALDPATRRNLEITASMAEGKKSGSLLGCLDRTVTAMGARRLKQWLGYPLVGLEPIRSRLDAVEELLEGATTRDELAAQMKGIADLERLNGRIGMASASGRDLRALHDSLQRIPPLRELMATMQTALLCQLTKEIDPLEDILDLVGRGIVENPPFSLREGGIIAPGYNPELDELRSISHEGKGFIARLEAQERARTGISSLKIRFNKVFGYSIEITKSNLASVPADYIRRQTLANAERYITEELKNYEEKVLGAEDRIHELEYSLFQEIRERVAGEGSRIACSASGLATLDVLISLAGVADERGYCKPLVDDSQVIDIHDGRHPVIEAMKLGERFVPNDTLLDGGESQILMITGPNMAGKSTYMRQVALITLMAQAGSFVPAASARIGIADRIFTRVGAGDNLSRGQSTFMLEMMEAAGILRNATPKSLIVMDEIGRGTSTFDGVSIAWAVAEYIHDTPTCRSRTLFATHYHELTELAATRERIRNFTVAVREWNDQVIFLRTIVPGGASHSYGIQVARLAGMPADVIERAKEILRNLENGEFEEGAPRIAKSRRQRTPDPSPQFSLFESDEDLLRTRLKKLNIATLTPLEALNLLDELKRMA.

An ATP-binding site is contributed by 621–628 (GPNMAGKS). A disordered region spans residues 813–834 (GAPRIAKSRRQRTPDPSPQFSL).

It belongs to the DNA mismatch repair MutS family.

Functionally, this protein is involved in the repair of mismatches in DNA. It is possible that it carries out the mismatch recognition step. This protein has a weak ATPase activity. This chain is DNA mismatch repair protein MutS, found in Pelobacter propionicus (strain DSM 2379 / NBRC 103807 / OttBd1).